The following is a 763-amino-acid chain: Phosphoglycerol transferase I (763 aa).

The next 4 helical transmembrane spans lie at L4 to W19, W26 to S48, Y76 to L98, and P105 to A127.

It belongs to the OpgB family.

The protein localises to the cell inner membrane. The catalysed reaction is a phosphatidylglycerol + a membrane-derived-oligosaccharide D-glucose = a 1,2-diacyl-sn-glycerol + a membrane-derived-oligosaccharide 6-(glycerophospho)-D-glucose.. The protein operates within glycan metabolism; osmoregulated periplasmic glucan (OPG) biosynthesis. In terms of biological role, transfers a phosphoglycerol residue from phosphatidylglycerol to the membrane-bound nascent glucan backbones. This Escherichia coli O157:H7 protein is Phosphoglycerol transferase I.